We begin with the raw amino-acid sequence, 500 residues long: NF-kappa-B inhibitor cactus (500 aa).

Low complexity predominate over residues 1-43 (MPSPTKAAEAATKATATSDCSCSAASVEQRAPSNAANPSSSLA). Disordered regions lie at residues 1–148 (MPSP…MRLK) and 171–212 (LNNL…APPS). A Phosphoserine; by PKC modification is found at Ser45. Positions 69-86 (NETSDSGFISGPQSSQIF) are enriched in polar residues. Residues 118-130 (IIDEEEDQEEQEK) are compositionally biased toward acidic residues. Ser144 is modified (phosphoserine; by PKC). A compositionally biased stretch (polar residues) spans 171-189 (LNNLGQSSSTQITGRSKVQ). At Thr183 the chain carries Phosphothreonine; by PKC. Residues 190–212 (SSTASTANANPSGSGATSSAPPS) show a composition bias toward low complexity. 5 ANK repeats span residues 229–261 (DGDTPLHLACISGSVDVVAALIRMAPHPCLLNI), 265–294 (VAQTPLHLAALTAQPNIMRILLLAGAEPTV), 298–327 (HGNTALHLSCIAGEKQCVRALTEKFGATEI), 361–390 (DGERCVHLAAEAGHIDILRILVSHGADINA), and 395–424 (SGRTPLHIAIEGCNEDLANFLLDECEKLNL). A phosphothreonine; by PKC mark is found at Thr293 and Thr319. Ser395 is subject to Phosphoserine; by PKC.

Belongs to the NF-kappa-B inhibitor family. As to quaternary structure, phosphorylated isoform A binds to dorsal (dl); inhibits dl translocation to the nucleus and therefore from binding to DNA. In vitro, interacts with IKKbeta. Interacts with cactin and kappa-B-Ras. Post-translationally, activated IKKbeta phosphorylates cact. In terms of tissue distribution, expressed in ovary (at protein level).

The protein resides in the cytoplasm. In terms of biological role, involved in the formation of the dorsoventral pattern. It inhibits nuclear translocation of the dorsal morphogen in the dorsal region of the embryo. Acts as a negative regulator of the NF-kappa-B (rel) signaling pathway. Cact is degraded by IKKbeta, this is essential for NF-kappa-B (rel) activation. In Drosophila melanogaster (Fruit fly), this protein is NF-kappa-B inhibitor cactus (cact).